A 644-amino-acid polypeptide reads, in one-letter code: Protein cueball (644 aa).

A signal peptide spans 1 to 26; that stretch reads MIRIRFGMDVLLVLLLATCLLTPAHG. Residues 27 to 531 lie on the Extracellular side of the membrane; that stretch reads TPLEWDFAVT…VCLTPRVWTS (505 aa). Residues N82 and N108 are each glycosylated (N-linked (GlcNAc...) asparagine). LDL-receptor class B repeat units follow at residues 121–166, 167–211, and 212–257; these read MNLF…DVCR, RKLY…DQLS, and DRLF…TNDA. N-linked (GlcNAc...) asparagine glycans are attached at residues N175 and N190. The segment at 280-301 is disordered; that stretch reads TTTSKPEEEDSTDSTDFTDPEP. Acidic residues predominate over residues 286–301; it reads EEEDSTDSTDFTDPEP. Residue N313 is glycosylated (N-linked (GlcNAc...) asparagine). EGF-like domains are found at residues 398 to 430 and 433 to 471; these read EIRE…FTGE and ELSV…ARCE. 5 disulfides stabilise this stretch: C402/C411, C406/C421, C437/C447, C441/C459, and C461/C470. 2 N-linked (GlcNAc...) asparagine glycosylation sites follow: N473 and N508. Residues 532-552 form a helical membrane-spanning segment; sequence SVIIILVVGIVSSLLLVAVIV. Residues 553-644 are Cytoplasmic-facing; that stretch reads HGIRRLYKPK…LIHNMEDDLY (92 aa).

This sequence belongs to the cueball family.

Its subcellular location is the cell membrane. Has a role in spermatogenesis and oogenesis. The chain is Protein cueball from Drosophila sechellia (Fruit fly).